The sequence spans 594 residues: MAAAGGGWAAACEKFRSARTLSAVESRKDPETEPYRSKYSARALLQEVKQQLSAAEDCGEARLLAVRRAVLEYELGVNHTDTEELSAGEEHLQRCTQLLEPHRLSRDCVSLYIQAQNNLGILWSERDEIKTAQTYLESAEALYNQYMKEDGNPPLDPSEHFMAEEEKLTDQERSKRFEKAYTHTLYYLAQVYQHLEMIEKAAQYCHTTLKRQLEYCGYYPVEWALNAATLSQYYLSKQCFMESRHCLAAASVIFSQAGQVPSTEDNETEQDQQDLRQRKAEIARCWIKYCLNLLQSARKLLEDNIGELDPDRQLELKAQRKKEEDEKENGRKKAVLFGTSDICDSVLAMEEKVSSVYPLDFQEAREIFLVGQNYVQEAKEFFQVDGYVTDHIEIVQDHSALFKVLAFFEEDYERRCKMHKRRIDMLEPIYADLNPQYYLLISRQLQFELADTYYEMMDLKVAIGNRLEELDSHTIKKINSLAQLAIKYYELFLDSLRNPDKVFPEELEEDVLRPAMVAKFHIARLYGKLITSDSKKQLENMQTSLEYYTFLVDYCEKHPDAVRAVETELELSKEMVGLLPTRMERLRAKLCPFI.

It belongs to the KIF-binding protein family.

The protein localises to the cytoplasm. It is found in the cytoskeleton. Activator of KIF1B plus-end-directed microtubule motor activity. Required for organization of axonal microtubules, and axonal outgrowth and maintenance during peripheral and central nervous system development. The sequence is that of KIF-binding protein (Kifbp) from Gallus gallus (Chicken).